We begin with the raw amino-acid sequence, 600 residues long: MVNNMTDLTAQDAVWQTRDHLDDPVIGELRNRFGPDAFTVQATRTGVPVVWVKREQLLEVGDFLKKLPKPYVMLFDLHGMDERLRTHRDGLPAADFSVFYHLISIDRNRDIMLKVALSENDLHVPTFTKLFPNANWYERETWEMFGITFDGHPHLTRLLMPPTWEGHPLRKDYPARATEFDPFELTKAKQDLEMEALTFKPEDWGMQRGTENEDFMFLNLGPNHPSSHGAFRIVLQLDGEEIVDCVPDIGYHHRGAEKMGERQSWHSYIPYTDRIEYLGGCVNEMPYVLAVEKLAGITVPDRVNVIRVMLSELFRINSHLLYISTFIQDVGAMTPVFFAFTDRQKIYDVVEAITGFRMHPAWFRIGGVAHDLPRGWDRLLRDFLDWMPKRLDSYEKAALRNTILKGRSQGVAAYGKKEALDWGCTGAALRATGIDFDVRKSRPYSGYENFDFEIPVGGGVSDCYTRVMLKVEELRQSLRILEQCLNNMPEGPFKADHPLTTPPPKERTLQHIETLITHFLQVSWGPVMPANESFQMVEATKGINSYYLTSDGSTMSYRTRIRTPSYAHLQQIPVAVRGSLVSDLIVHLGSIDFVMSDVDR.

The tract at residues 1–190 (MVNNMTDLTA…DPFELTKAKQ (190 aa)) is NADH dehydrogenase I subunit C. The NADH dehydrogenase I subunit D stretch occupies residues 214–600 (DFMFLNLGPN…IDFVMSDVDR (387 aa)).

This sequence in the N-terminal section; belongs to the complex I 30 kDa subunit family. In the C-terminal section; belongs to the complex I 49 kDa subunit family. As to quaternary structure, NDH-1 is composed of 13 different subunits. Subunits NuoB, CD, E, F, and G constitute the peripheral sector of the complex.

The protein localises to the cell inner membrane. It carries out the reaction a quinone + NADH + 5 H(+)(in) = a quinol + NAD(+) + 4 H(+)(out). Its function is as follows. NDH-1 shuttles electrons from NADH, via FMN and iron-sulfur (Fe-S) centers, to quinones in the respiratory chain. The immediate electron acceptor for the enzyme in this species is believed to be ubiquinone. Couples the redox reaction to proton translocation (for every two electrons transferred, four hydrogen ions are translocated across the cytoplasmic membrane), and thus conserves the redox energy in a proton gradient. This Citrobacter koseri (strain ATCC BAA-895 / CDC 4225-83 / SGSC4696) protein is NADH-quinone oxidoreductase subunit C/D.